We begin with the raw amino-acid sequence, 170 residues long: Large ribosomal subunit protein uL22z (170 aa).

The protein belongs to the universal ribosomal protein uL22 family.

This chain is Large ribosomal subunit protein uL22z, found in Hordeum vulgare (Barley).